We begin with the raw amino-acid sequence, 467 residues long: 5'-nucleotidase domain-containing protein 1 (467 aa).

Catalysis depends on Asp16, which acts as the Nucleophile. The Mg(2+) site is built by Asp16 and Asp18. Asp18 acts as the Proton donor in catalysis. Lys181 is subject to N6-acetyllysine. Asp323 is a Mg(2+) binding site.

It belongs to the 5'(3')-deoxyribonucleotidase family.

In Mus musculus (Mouse), this protein is 5'-nucleotidase domain-containing protein 1 (Nt5dc1).